Here is a 324-residue protein sequence, read N- to C-terminus: Acetyl-coenzyme A carboxylase carboxyl transferase subunit alpha (324 aa).

Positions 44 to 298 constitute a CoA carboxyltransferase C-terminal domain; that stretch reads RFQDKLTKLQ…RKELIKQLNI (255 aa).

It belongs to the AccA family. In terms of assembly, acetyl-CoA carboxylase is a heterohexamer composed of biotin carboxyl carrier protein (accB), biotin carboxylase (accC) and two subunits each of ACCase subunit alpha (accA) and ACCase subunit beta (accD).

It is found in the plastid. The protein localises to the chloroplast. The catalysed reaction is N(6)-carboxybiotinyl-L-lysyl-[protein] + acetyl-CoA = N(6)-biotinyl-L-lysyl-[protein] + malonyl-CoA. It participates in lipid metabolism; malonyl-CoA biosynthesis; malonyl-CoA from acetyl-CoA: step 1/1. Its function is as follows. Component of the acetyl coenzyme A carboxylase (ACC) complex. First, biotin carboxylase catalyzes the carboxylation of biotin on its carrier protein (BCCP) and then the CO(2) group is transferred by the carboxyltransferase to acetyl-CoA to form malonyl-CoA. This chain is Acetyl-coenzyme A carboxylase carboxyl transferase subunit alpha, found in Porphyra purpurea (Red seaweed).